The chain runs to 266 residues: Large ribosomal subunit protein eL8 (266 aa).

A compositionally biased stretch (basic residues) spans 1-11 (MPKGKKAKGKK). A disordered region spans residues 1-21 (MPKGKKAKGKKVAPAPSVAKK).

This sequence belongs to the eukaryotic ribosomal protein eL8 family. As to quaternary structure, component of the large ribosomal subunit.

It localises to the cytoplasm. Functionally, component of the large ribosomal subunit. The ribosome is a large ribonucleoprotein complex responsible for the synthesis of proteins in the cell. This Ictalurus punctatus (Channel catfish) protein is Large ribosomal subunit protein eL8 (rpl7a).